We begin with the raw amino-acid sequence, 161 residues long: Nucleotide-binding protein PBPRA2024 (161 aa).

This sequence belongs to the YajQ family.

Functionally, nucleotide-binding protein. This chain is Nucleotide-binding protein PBPRA2024, found in Photobacterium profundum (strain SS9).